Here is a 348-residue protein sequence, read N- to C-terminus: Protein RecA (348 aa).

ATP is bound at residue Gly64 to Thr71. Residues Tyr325–Leu335 are compositionally biased toward basic and acidic residues. Positions Tyr325–Glu348 are disordered.

It belongs to the RecA family.

Its subcellular location is the cytoplasm. Its function is as follows. Can catalyze the hydrolysis of ATP in the presence of single-stranded DNA, the ATP-dependent uptake of single-stranded DNA by duplex DNA, and the ATP-dependent hybridization of homologous single-stranded DNAs. It interacts with LexA causing its activation and leading to its autocatalytic cleavage. The protein is Protein RecA of Listeria monocytogenes serotype 1/2a (strain 10403S).